The following is a 311-amino-acid chain: Formimidoylglutamase (311 aa).

Mn(2+)-binding residues include His130, Asp155, His157, Asp159, Cys242, and Asp244.

It belongs to the arginase family. Requires Mn(2+) as cofactor.

The enzyme catalyses N-formimidoyl-L-glutamate + H2O = formamide + L-glutamate. It participates in amino-acid degradation; L-histidine degradation into L-glutamate; L-glutamate from N-formimidoyl-L-glutamate (hydrolase route): step 1/1. Functionally, catalyzes the conversion of N-formimidoyl-L-glutamate to L-glutamate and formamide. In Staphylococcus epidermidis (strain ATCC 35984 / DSM 28319 / BCRC 17069 / CCUG 31568 / BM 3577 / RP62A), this protein is Formimidoylglutamase.